A 474-amino-acid chain; its full sequence is tRNA-2-methylthio-N(6)-dimethylallyladenosine synthase (474 aa).

Residues 3–120 (KKLLIKTWGC…LPEMIKQSQT (118 aa)) form the MTTase N-terminal domain. Residues cysteine 12, cysteine 49, cysteine 83, cysteine 157, cysteine 161, and cysteine 164 each coordinate [4Fe-4S] cluster. The Radical SAM core domain maps to 143–375 (RAEGATAFVS…QQTINAQAMR (233 aa)). Residues 378 to 441 (RLMLATEQRV…ANSLRGELVR (64 aa)) form the TRAM domain.

The protein belongs to the methylthiotransferase family. MiaB subfamily. In terms of assembly, monomer. The cofactor is [4Fe-4S] cluster.

It localises to the cytoplasm. It carries out the reaction N(6)-dimethylallyladenosine(37) in tRNA + (sulfur carrier)-SH + AH2 + 2 S-adenosyl-L-methionine = 2-methylsulfanyl-N(6)-dimethylallyladenosine(37) in tRNA + (sulfur carrier)-H + 5'-deoxyadenosine + L-methionine + A + S-adenosyl-L-homocysteine + 2 H(+). In terms of biological role, catalyzes the methylthiolation of N6-(dimethylallyl)adenosine (i(6)A), leading to the formation of 2-methylthio-N6-(dimethylallyl)adenosine (ms(2)i(6)A) at position 37 in tRNAs that read codons beginning with uridine. The sequence is that of tRNA-2-methylthio-N(6)-dimethylallyladenosine synthase from Vibrio parahaemolyticus serotype O3:K6 (strain RIMD 2210633).